We begin with the raw amino-acid sequence, 491 residues long: Nucleotidyltransferase MB21D2 (491 aa).

Polar residues predominate over residues Arg431–Ser442. The interval Arg431–Asp452 is disordered. Position 435 is a phosphothreonine (Thr435). Residues Ser436, Ser439, and Ser442 each carry the phosphoserine modification.

Belongs to the mab-21 family.

Probable nucleotidyltransferase that catalyzes the formation of cyclic dinucleotide second messenger in response to some unknown stimulus. The polypeptide is Nucleotidyltransferase MB21D2 (Homo sapiens (Human)).